Here is a 417-residue protein sequence, read N- to C-terminus: D-amino acid dehydrogenase (417 aa).

3–17 (IIVLGAGVIGVTSAY) is a binding site for FAD.

The protein belongs to the DadA oxidoreductase family. It depends on FAD as a cofactor.

It catalyses the reaction a D-alpha-amino acid + A + H2O = a 2-oxocarboxylate + AH2 + NH4(+). The protein operates within amino-acid degradation; D-alanine degradation; NH(3) and pyruvate from D-alanine: step 1/1. In terms of biological role, oxidative deamination of D-amino acids. The chain is D-amino acid dehydrogenase from Azorhizobium caulinodans (strain ATCC 43989 / DSM 5975 / JCM 20966 / LMG 6465 / NBRC 14845 / NCIMB 13405 / ORS 571).